A 177-amino-acid polypeptide reads, in one-letter code: Ribulose bisphosphate carboxylase small subunit, chloroplastic (177 aa).

Residues 1–55 (MASLMSNAAVVTASTAAQANMVAPFSGLKSTSAFPVSRKSNVDITSLATNGGRVN) constitute a chloroplast transit peptide.

It belongs to the RuBisCO small chain family. As to quaternary structure, heterohexadecamer of 8 large and 8 small subunits.

Its subcellular location is the plastid. It localises to the chloroplast. Its function is as follows. RuBisCO catalyzes two reactions: the carboxylation of D-ribulose 1,5-bisphosphate, the primary event in carbon dioxide fixation, as well as the oxidative fragmentation of the pentose substrate. Both reactions occur simultaneously and in competition at the same active site. Although the small subunit is not catalytic it is essential for maximal activity. In Silene latifolia subsp. alba (White campion), this protein is Ribulose bisphosphate carboxylase small subunit, chloroplastic.